Reading from the N-terminus, the 129-residue chain is uncharacterized protein (129 aa).

Residues 77–97 form a helical membrane-spanning segment; sequence ILAVFIISFIIVVVGVLLLGL. Positions 109-129 are disordered; the sequence is SSNDKKLQSNDEEKQALAEKA. The span at 111-129 shows a compositional bias: basic and acidic residues; the sequence is NDKKLQSNDEEKQALAEKA.

The protein resides in the vacuole membrane. This is an uncharacterized protein from Saccharomyces cerevisiae (strain ATCC 204508 / S288c) (Baker's yeast).